A 644-amino-acid chain; its full sequence is Threonine--tRNA ligase (644 aa).

The TGS domain occupies 1-61; it reads MNVTIEGQVF…ADTTTIEPVF (61 aa). Positions 241–532 are catalytic; that stretch reads DHRKLGQQLD…LTEHFAGAFP (292 aa). The Zn(2+) site is built by C333, H384, and H509.

This sequence belongs to the class-II aminoacyl-tRNA synthetase family. Homodimer. It depends on Zn(2+) as a cofactor.

The protein localises to the cytoplasm. It carries out the reaction tRNA(Thr) + L-threonine + ATP = L-threonyl-tRNA(Thr) + AMP + diphosphate + H(+). Functionally, catalyzes the attachment of threonine to tRNA(Thr) in a two-step reaction: L-threonine is first activated by ATP to form Thr-AMP and then transferred to the acceptor end of tRNA(Thr). Also edits incorrectly charged L-seryl-tRNA(Thr). This Nitratidesulfovibrio vulgaris (strain DSM 19637 / Miyazaki F) (Desulfovibrio vulgaris) protein is Threonine--tRNA ligase.